Reading from the N-terminus, the 418-residue chain is Sprouty-related, EVH1 domain-containing protein 2 (418 aa).

Residues 5-122 form the WH1 domain; sequence THPDDDSYIV…RGVRKAIEDL (118 aa). The disordered stretch occupies residues 127-171; that stretch reads TTSSSTIHNEAELGDDDVFTTATDSSSNSSQKREQPTRTISSPTS. Residues 146-156 show a composition bias toward polar residues; sequence TTATDSSSNSS. One can recognise a KBD domain in the interval 201-257; it reads PYRQVSFPDDDEEIVRINPREKIWMTGYEDYRHAPVRGKYPDPSEDADSSYVRFAKG. The residue at position 206 (Ser206) is a Phosphoserine. A phosphotyrosine mark is found at Tyr228 and Tyr231. The tract at residues 275–302 is disordered; the sequence is GLGEDPKGRGGSVIKTQPSRGKSRRRKE. One can recognise an SPR domain in the interval 308–416; sequence RCVYCRDMFN…CRCCGGKHKA (109 aa).

In terms of assembly, homodimer and heterodimer. Able to interact with SPRED1 to form heterodimers. Interacts with RAS. May interact with ZDHHC13 (via ANK repeats) and ZDHHC17 (via ANK repeats). Interacts with TESK1. Interacts with NF1. Phosphorylated on serine and threonine residues. Phosphorylated on tyrosine. Phosphorylation of Tyr-228 and Tyr-231 are required for ubiquitination. In terms of processing, ubiquitinated; leading to degradation by the proteasome. In terms of tissue distribution, expressed in liver, skin, small intestine, salivary gland and prostate.

Its subcellular location is the cell membrane. It is found in the cytoplasmic vesicle. The protein localises to the secretory vesicle membrane. It localises to the cytoplasm. Functionally, negatively regulates Ras signaling pathways and downstream activation of MAP kinases. Recruits and translocates NF1 to the cell membrane, thereby enabling NF1-dependent hydrolysis of active GTP-bound Ras to inactive GDP-bound Ras. Inhibits fibroblast growth factor (FGF)-induced retinal lens fiber differentiation, probably by inhibiting FGF-mediated phosphorylation of ERK1/2. Inhibits TGFB-induced epithelial-to-mesenchymal transition in lens epithelial cells. The chain is Sprouty-related, EVH1 domain-containing protein 2 (SPRED2) from Homo sapiens (Human).